The following is a 110-amino-acid chain: Small ribosomal subunit protein eS25 (110 aa).

The interval 1–37 is disordered; the sequence is MGGASKKPISTMEKRLKKEAEKQQKAEEKKKGPSKTG. Positions 12 to 37 are enriched in basic and acidic residues; it reads MEKRLKKEAEKQQKAEEKKKGPSKTG.

It belongs to the eukaryotic ribosomal protein eS25 family.

This Saccharolobus solfataricus (strain ATCC 35092 / DSM 1617 / JCM 11322 / P2) (Sulfolobus solfataricus) protein is Small ribosomal subunit protein eS25 (rps25e).